The sequence spans 306 residues: Recombination-associated protein RdgC (306 aa).

The protein belongs to the RdgC family.

It is found in the cytoplasm. Its subcellular location is the nucleoid. In terms of biological role, may be involved in recombination. The polypeptide is Recombination-associated protein RdgC (Pseudomonas putida (strain ATCC 47054 / DSM 6125 / CFBP 8728 / NCIMB 11950 / KT2440)).